Reading from the N-terminus, the 279-residue chain is Cell division protein FtsQ (279 aa).

The segment at 1-28 (MTPMKKQLDKSLGSRRGATATRAKERAD) is disordered. The Cytoplasmic segment spans residues 1 to 48 (MTPMKKQLDKSLGSRRGATATRAKERADNRNTGPAAIVRLLAFIPWNR). A helical membrane pass occupies residues 49 to 69 (VLLHVSIFCFWLLVLSALIAG). The Periplasmic segment spans residues 70-279 (VKWLDRPVAT…WKADVTPEQG (210 aa)). Residues 75 to 144 (RPVATVQVVG…DAVQVDLEEE (70 aa)) form the POTRA domain.

The protein belongs to the FtsQ/DivIB family. FtsQ subfamily. Part of a complex composed of FtsB, FtsL and FtsQ.

The protein resides in the cell inner membrane. Its function is as follows. Essential cell division protein. May link together the upstream cell division proteins, which are predominantly cytoplasmic, with the downstream cell division proteins, which are predominantly periplasmic. May control correct divisome assembly. The sequence is that of Cell division protein FtsQ from Hahella chejuensis (strain KCTC 2396).